The following is a 274-amino-acid chain: 3-methyl-2-oxobutanoate hydroxymethyltransferase (274 aa).

Mg(2+)-binding residues include Asp44 and Asp83. 3-methyl-2-oxobutanoate-binding positions include 44–45, Asp83, and Lys113; that span reads DS. Glu115 lines the Mg(2+) pocket. Residue Glu182 is the Proton acceptor of the active site.

It belongs to the PanB family. In terms of assembly, homodecamer; pentamer of dimers. The cofactor is Mg(2+).

It is found in the cytoplasm. It carries out the reaction 3-methyl-2-oxobutanoate + (6R)-5,10-methylene-5,6,7,8-tetrahydrofolate + H2O = 2-dehydropantoate + (6S)-5,6,7,8-tetrahydrofolate. The protein operates within cofactor biosynthesis; (R)-pantothenate biosynthesis; (R)-pantoate from 3-methyl-2-oxobutanoate: step 1/2. Functionally, catalyzes the reversible reaction in which hydroxymethyl group from 5,10-methylenetetrahydrofolate is transferred onto alpha-ketoisovalerate to form ketopantoate. This chain is 3-methyl-2-oxobutanoate hydroxymethyltransferase, found in Campylobacter jejuni subsp. jejuni serotype O:6 (strain 81116 / NCTC 11828).